We begin with the raw amino-acid sequence, 109 residues long: Cell division protein ZapA (109 aa).

Residues 21–97 adopt a coiled-coil conformation; sequence PEQQEALNQA…QTIEQALVEQ (77 aa).

Belongs to the ZapA family. Type 1 subfamily. In terms of assembly, homodimer. Interacts with FtsZ.

It localises to the cytoplasm. Activator of cell division through the inhibition of FtsZ GTPase activity, therefore promoting FtsZ assembly into bundles of protofilaments necessary for the formation of the division Z ring. It is recruited early at mid-cell but it is not essential for cell division. This Sodalis glossinidius (strain morsitans) protein is Cell division protein ZapA.